Reading from the N-terminus, the 496-residue chain is Probable cytosol aminopeptidase (496 aa).

2 residues coordinate Mn(2+): Lys261 and Asp266. The active site involves Lys273. 3 residues coordinate Mn(2+): Asp284, Asp343, and Glu345. Arg347 is a catalytic residue.

Belongs to the peptidase M17 family. It depends on Mn(2+) as a cofactor.

It is found in the cytoplasm. It catalyses the reaction Release of an N-terminal amino acid, Xaa-|-Yaa-, in which Xaa is preferably Leu, but may be other amino acids including Pro although not Arg or Lys, and Yaa may be Pro. Amino acid amides and methyl esters are also readily hydrolyzed, but rates on arylamides are exceedingly low.. It carries out the reaction Release of an N-terminal amino acid, preferentially leucine, but not glutamic or aspartic acids.. Its function is as follows. Presumably involved in the processing and regular turnover of intracellular proteins. Catalyzes the removal of unsubstituted N-terminal amino acids from various peptides. The chain is Probable cytosol aminopeptidase from Bacillus pumilus (strain SAFR-032).